The chain runs to 195 residues: Porimin (195 aa).

The signal sequence occupies residues 1-23; the sequence is MALCARAALLLGVLQVLALLGAA. The Extracellular segment spans residues 24–152; the sequence is QDPTDAQGSA…PTKGKGSKFD (129 aa). N-linked (GlcNAc...) asparagine glycosylation is found at Asn36, Asn45, Asn51, Asn59, Asn109, and Asn115. Positions 99 to 127 are disordered; that stretch reads VTPTASKSTPNASASPNSTHTSASMTTPA. Over residues 101–126 the composition is skewed to polar residues; it reads PTASKSTPNASASPNSTHTSASMTTP. A helical membrane pass occupies residues 153 to 173; that stretch reads AGSFVGGIVLTLGVLSILYIG. Over 174–195 the chain is Cytoplasmic; the sequence is CKMYYSRRGIRYRSIDEHDAII. Ser187 is modified (phosphoserine).

It belongs to the CD164 family.

Its subcellular location is the membrane. Implicated in oncotic cell death, characterized by cell swelling, organelle swelling, vacuolization and increased membrane permeability. The sequence is that of Porimin (Tmem123) from Mus musculus (Mouse).